Reading from the N-terminus, the 859-residue chain is Leucine--tRNA ligase (859 aa).

A 'HIGH' region motif is present at residues 42–52 (PYPSGRLHMGH). Positions 618–622 (KMSKS) match the 'KMSKS' region motif. K621 contacts ATP.

It belongs to the class-I aminoacyl-tRNA synthetase family.

The protein localises to the cytoplasm. It carries out the reaction tRNA(Leu) + L-leucine + ATP = L-leucyl-tRNA(Leu) + AMP + diphosphate. The protein is Leucine--tRNA ligase of Shewanella putrefaciens (strain CN-32 / ATCC BAA-453).